The sequence spans 222 residues: Thiopurine S-methyltransferase (222 aa).

4 residues coordinate S-adenosyl-L-methionine: Trp-10, Leu-45, Glu-66, and Arg-123.

The protein belongs to the class I-like SAM-binding methyltransferase superfamily. TPMT family.

Its subcellular location is the cytoplasm. The catalysed reaction is S-adenosyl-L-methionine + a thiopurine = S-adenosyl-L-homocysteine + a thiopurine S-methylether.. The protein is Thiopurine S-methyltransferase of Pseudomonas fluorescens (strain ATCC BAA-477 / NRRL B-23932 / Pf-5).